We begin with the raw amino-acid sequence, 270 residues long: Formamidopyrimidine-DNA glycosylase (270 aa).

The Schiff-base intermediate with DNA role is filled by Pro-2. Residue Glu-3 is the Proton donor of the active site. Lys-58 serves as the catalytic Proton donor; for beta-elimination activity. Positions 91, 110, and 151 each coordinate DNA. The FPG-type zinc finger occupies 236–270 (FVYGRGGEFCKSCGSTLREIRLGQRASVYCSRCQR). Arg-260 (proton donor; for delta-elimination activity) is an active-site residue.

Belongs to the FPG family. As to quaternary structure, monomer. Zn(2+) serves as cofactor.

The catalysed reaction is Hydrolysis of DNA containing ring-opened 7-methylguanine residues, releasing 2,6-diamino-4-hydroxy-5-(N-methyl)formamidopyrimidine.. It catalyses the reaction 2'-deoxyribonucleotide-(2'-deoxyribose 5'-phosphate)-2'-deoxyribonucleotide-DNA = a 3'-end 2'-deoxyribonucleotide-(2,3-dehydro-2,3-deoxyribose 5'-phosphate)-DNA + a 5'-end 5'-phospho-2'-deoxyribonucleoside-DNA + H(+). Involved in base excision repair of DNA damaged by oxidation or by mutagenic agents. Acts as a DNA glycosylase that recognizes and removes damaged bases. Has a preference for oxidized purines, such as 7,8-dihydro-8-oxoguanine (8-oxoG). Has AP (apurinic/apyrimidinic) lyase activity and introduces nicks in the DNA strand. Cleaves the DNA backbone by beta-delta elimination to generate a single-strand break at the site of the removed base with both 3'- and 5'-phosphates. The chain is Formamidopyrimidine-DNA glycosylase from Stutzerimonas stutzeri (strain A1501) (Pseudomonas stutzeri).